Reading from the N-terminus, the 1031-residue chain is Protein translocase subunit SecA (1031 aa).

ATP-binding positions include Q143, 161–165 (GEGKT), and D661. Over residues 963–973 (KERLVAKHEES) the composition is skewed to basic and acidic residues. The interval 963 to 1031 (KERLVAKHEE…GKKYKNCCGR (69 aa)) is disordered. 4 residues coordinate Zn(2+): C1017, C1019, C1028, and C1029.

This sequence belongs to the SecA family. As to quaternary structure, monomer and homodimer. Part of the essential Sec protein translocation apparatus which comprises SecA, SecYEG and auxiliary proteins SecDF. Other proteins may also be involved. It depends on Zn(2+) as a cofactor.

It is found in the cell inner membrane. The protein localises to the cytoplasm. It catalyses the reaction ATP + H2O + cellular proteinSide 1 = ADP + phosphate + cellular proteinSide 2.. Functionally, part of the Sec protein translocase complex. Interacts with the SecYEG preprotein conducting channel. Has a central role in coupling the hydrolysis of ATP to the transfer of proteins into and across the cell membrane, serving as an ATP-driven molecular motor driving the stepwise translocation of polypeptide chains across the membrane. The polypeptide is Protein translocase subunit SecA (Prosthecochloris aestuarii (strain DSM 271 / SK 413)).